The following is a 45-amino-acid chain: uncharacterized protein (45 aa).

The helical transmembrane segment at 10–27 threads the bilayer; it reads LLYFVLFVDIYGIFTNNI.

Its subcellular location is the membrane. This is an uncharacterized protein from Dictyostelium discoideum (Social amoeba).